We begin with the raw amino-acid sequence, 496 residues long: E1B 55 kDa protein (496 aa).

The interval 1–74 is disordered; it reads MERRNPSERG…EPESRPGPSG (74 aa). Residues 45–61 show a composition bias toward low complexity; sequence GGAAAAAGGSQAAAAGA. Ser-490 and Ser-491 each carry phosphoserine. Thr-495 is modified (phosphothreonine).

The protein belongs to the adenoviridae E1B 55 kDa protein family. As to quaternary structure, interacts with host PML-4 and PML-5; this interaction promotes efficient subnuclear targeting of E1B-55K to PML nuclear bodies. Interacts with E4-ORF3 protein. Interacts with E4-ORF6 protein. In terms of processing, phosphorylation at the C-terminus affects the subcellular location.

It is found in the host nucleus. It localises to the host cytoplasm. Its function is as follows. Plays a major role to prevent cellular inhibition of viral genome replication. Assembles an SCF-like E3 ubiquitin ligase complex based on the cellular proteins ELOB, ELOC, CUL5 and RBX1, in cooperation with viral E4orf6. This viral RING-type ligase ubiquitinates cellular substrates and targets them to proteasomal degradation: TP53/p53, LIG4, MRE11-RAD50-NBS1 (MRN) complex, ITGA3, DAXX and BLM. E1B-55K probably acts as the substrate-specific adapter of the SCF-like E3 ubiquitin ligase complex. Degradation of host TP53/p53 activity is essential for preventing E1A-induced TP53 accumulation that would otherwise lead to cell apoptosis and growth arrest. E1B-55K also inactivates TP53 transcription-factor activity by binding its transactivation domain. E1B-55K also functions as a SUMO1 E3 ligase for TP53 which causes the latter to be sequestered in promyelocytic leukemia (PML) nuclear bodies thereby contributing to maximal inhibition of TP53 function. The protein is E1B 55 kDa protein of Homo sapiens (Human).